Reading from the N-terminus, the 465-residue chain is tRNA-2-methylthio-N(6)-dimethylallyladenosine synthase (465 aa).

One can recognise an MTTase N-terminal domain in the interval 26 to 141; that stretch reads MRAHIITYGC…LPEALKANER (116 aa). The [4Fe-4S] cluster site is built by Cys-35, Cys-71, Cys-104, Cys-173, Cys-177, and Cys-180. One can recognise a Radical SAM core domain in the interval 159-388; it reads PKGALSAHVT…IEKQKEWSYR (230 aa). The region spanning 391–453 is the TRAM domain; that stretch reads LEWVGKTVEV…PHLLFGEVVG (63 aa).

Belongs to the methylthiotransferase family. MiaB subfamily. Monomer. The cofactor is [4Fe-4S] cluster.

The protein resides in the cytoplasm. It carries out the reaction N(6)-dimethylallyladenosine(37) in tRNA + (sulfur carrier)-SH + AH2 + 2 S-adenosyl-L-methionine = 2-methylsulfanyl-N(6)-dimethylallyladenosine(37) in tRNA + (sulfur carrier)-H + 5'-deoxyadenosine + L-methionine + A + S-adenosyl-L-homocysteine + 2 H(+). Functionally, catalyzes the methylthiolation of N6-(dimethylallyl)adenosine (i(6)A), leading to the formation of 2-methylthio-N6-(dimethylallyl)adenosine (ms(2)i(6)A) at position 37 in tRNAs that read codons beginning with uridine. In Thermus thermophilus (strain ATCC 27634 / DSM 579 / HB8), this protein is tRNA-2-methylthio-N(6)-dimethylallyladenosine synthase.